The sequence spans 219 residues: tRNA (guanine-N(7)-)-methyltransferase (219 aa).

Glutamate 43, aspartate 68, glutamate 101, and asparagine 124 together coordinate S-adenosyl-L-methionine. 2 residues coordinate substrate: lysine 128 and aspartate 160.

Belongs to the class I-like SAM-binding methyltransferase superfamily. TrmB family.

It carries out the reaction guanosine(46) in tRNA + S-adenosyl-L-methionine = N(7)-methylguanosine(46) in tRNA + S-adenosyl-L-homocysteine. The protein operates within tRNA modification; N(7)-methylguanine-tRNA biosynthesis. Catalyzes the formation of N(7)-methylguanine at position 46 (m7G46) in tRNA. The sequence is that of tRNA (guanine-N(7)-)-methyltransferase from Clostridium botulinum (strain Alaska E43 / Type E3).